The primary structure comprises 980 residues: Vacuolar protein sorting-associated protein 11 homolog (980 aa).

One copy of the CHCR repeat lies at 407–554; that stretch reads YKETIGMLEP…GRDLLIHARD (148 aa). The RING-type; atypical zinc finger occupies 803–843; sequence CSACDTPLQLPTVHFLCKHAYHVHCFESYNMDGSDKCPACQ. A compositionally biased stretch (basic and acidic residues) spans 886-898; sequence TKKTKKSEAKKDP. The segment at 886 to 980 is disordered; sequence TKKTKKSEAK…APAPSTNPFD (95 aa). 2 stretches are compositionally biased toward polar residues: residues 917–937 and 947–960; these read TTISRTMSTVSSNMATPSRQR and TNPFFNSDSGTRLS.

The protein belongs to the VPS11 family. As to quaternary structure, probable core component of at least two putative endosomal tethering complexes, the homotypic fusion and vacuole protein sorting (HOPS) complex and the class C core vacuole/endosome tethering (CORVET) complex. Their common core is composed of the class C Vps proteins vps-11, vps-16 and vps-18, which in HOPS further associates with vps-33.1, vps-39 and vps-41 and in CORVET with vps-8 and vps-33.2.

The protein localises to the late endosome membrane. The protein resides in the lysosome membrane. Its function is as follows. Plays a role in vesicle-mediated protein trafficking to lysosomal compartments including the endocytic membrane transport pathways. Believed to act as a core component of the putative HOPS and CORVET endosomal tethering complexes which are proposed to be involved in the rab-5-to-rab-7 endosome conversion probably implicating sand-1, and via binding SNAREs and SNARE complexes to mediate tethering and docking events during SNARE-mediated membrane fusion. The HOPS complex is proposed to be recruited to Rab7 on the late endosomal membrane and to regulate late endocytic, phagocytic and autophagic traffic towards lysosomes. Within the HOPS complex, contributes to the normal development of gut granules in embryonic and adult intestinal cells. The CORVET complex is proposed to function as a Rab5 effector to mediate early endosome fusion probably in specific endosome subpopulations. Required for fusion of endosomes and autophagosomes with lysosomes. Involved in cargo transport from early to late endosomes and required for the transition from early to late endosomes. Possibly has a role in clearance of apoptotic cells during programmed cell death. The chain is Vacuolar protein sorting-associated protein 11 homolog from Caenorhabditis elegans.